Reading from the N-terminus, the 122-residue chain is Large ribosomal subunit protein uL14 (122 aa).

Belongs to the universal ribosomal protein uL14 family. As to quaternary structure, part of the 50S ribosomal subunit. Forms a cluster with proteins L3 and L19. In the 70S ribosome, L14 and L19 interact and together make contacts with the 16S rRNA in bridges B5 and B8.

Functionally, binds to 23S rRNA. Forms part of two intersubunit bridges in the 70S ribosome. This Listeria monocytogenes serotype 4b (strain CLIP80459) protein is Large ribosomal subunit protein uL14.